A 507-amino-acid polypeptide reads, in one-letter code: Cobyric acid synthase (507 aa).

The region spanning 251–448 is the GATase cobBQ-type domain; sequence DIDIAVVHLP…LHGLFDSDAF (198 aa). The active-site Nucleophile is C332. Residue H440 is part of the active site.

Belongs to the CobB/CobQ family. CobQ subfamily.

The protein operates within cofactor biosynthesis; adenosylcobalamin biosynthesis. Its function is as follows. Catalyzes amidations at positions B, D, E, and G on adenosylcobyrinic A,C-diamide. NH(2) groups are provided by glutamine, and one molecule of ATP is hydrogenolyzed for each amidation. In Klebsiella pneumoniae (strain 342), this protein is Cobyric acid synthase.